The primary structure comprises 203 residues: Protein-methionine-sulfoxide reductase heme-binding subunit MsrQ (203 aa).

Transmembrane regions (helical) follow at residues 10–30 (IFVV…MSLL), 42–62 (LGLG…LQKL), 75–95 (LGLW…FFIL), 110–130 (PYII…ITSN), 147–167 (LVYA…RSDL), and 169–189 (EWSI…PAVA).

It belongs to the MsrQ family. Heterodimer of a catalytic subunit (MsrP) and a heme-binding subunit (MsrQ). It depends on FMN as a cofactor. Heme b is required as a cofactor.

The protein localises to the cell inner membrane. Its function is as follows. Part of the MsrPQ system that repairs oxidized periplasmic proteins containing methionine sulfoxide residues (Met-O), using respiratory chain electrons. Thus protects these proteins from oxidative-stress damage caused by reactive species of oxygen and chlorine generated by the host defense mechanisms. MsrPQ is essential for the maintenance of envelope integrity under bleach stress, rescuing a wide series of structurally unrelated periplasmic proteins from methionine oxidation. MsrQ provides electrons for reduction to the reductase catalytic subunit MsrP, using the quinone pool of the respiratory chain. This is Protein-methionine-sulfoxide reductase heme-binding subunit MsrQ from Pseudomonas putida (strain GB-1).